Reading from the N-terminus, the 385-residue chain is 8-amino-7-oxononanoate synthase (385 aa).

Arginine 23 serves as a coordination point for substrate. Glycine 110–phenylalanine 111 is a binding site for pyridoxal 5'-phosphate. Histidine 135 contributes to the substrate binding site. Pyridoxal 5'-phosphate contacts are provided by serine 180, histidine 208, and threonine 234. Lysine 237 is subject to N6-(pyridoxal phosphate)lysine. Threonine 350 lines the substrate pocket.

The protein belongs to the class-II pyridoxal-phosphate-dependent aminotransferase family. BioF subfamily. As to quaternary structure, homodimer. Pyridoxal 5'-phosphate is required as a cofactor.

The catalysed reaction is 6-carboxyhexanoyl-[ACP] + L-alanine + H(+) = (8S)-8-amino-7-oxononanoate + holo-[ACP] + CO2. It participates in cofactor biosynthesis; biotin biosynthesis. Its function is as follows. Catalyzes the decarboxylative condensation of pimeloyl-[acyl-carrier protein] and L-alanine to produce 8-amino-7-oxononanoate (AON), [acyl-carrier protein], and carbon dioxide. The sequence is that of 8-amino-7-oxononanoate synthase from Vibrio vulnificus (strain CMCP6).